We begin with the raw amino-acid sequence, 570 residues long: Apyrase (570 aa).

A signal peptide spans 1–23; the sequence is MALVRFATIITVLCHLAIQDGAA. Positions 43, 45, and 94 each coordinate a divalent metal cation. Residue Asn108 is glycosylated (N-linked (GlcNAc...) asparagine). A divalent metal cation-binding residues include Asn126, His229, and His253. N-linked (GlcNAc...) asparagine glycosylation is found at Asn287 and Asn326. Arg367 contributes to the AMP binding site. A glycan (N-linked (GlcNAc...) asparagine) is linked at Asn387. AMP is bound by residues Arg402 and Asp507. 2 N-linked (GlcNAc...) asparagine glycosylation sites follow: Asn552 and Asn555.

It belongs to the 5'-nucleotidase family. In terms of assembly, interacts with human PLAT; the interaction results in PLAT activation probably via an allosteric activation mechanism. It depends on a divalent metal cation as a cofactor. As to expression, saliva (at protein level). Salivary gland (at protein level). Not detected in midgut.

It is found in the secreted. The enzyme catalyses a ribonucleoside 5'-triphosphate + 2 H2O = a ribonucleoside 5'-phosphate + 2 phosphate + 2 H(+). Its function is as follows. Cleaves adenosine triphosphate (ATP) and adenosine diphosphate (ADP) to adenosine monophosphate (AMP) and inorganic phosphate. Enhances fibrin degradation in the midgut blood bolus. Activates human tissue plasminogen activator (PLAT), probably via an allosteric activation mechanism. Inhibits ADP-mediated host platelet aggregation in vitro and in mosquito midgut. Inhibits host neutrophil activation in the mosquito midgut: reduces neutrophil extracellular traps formation in the presence of platelets and the formation of total cell- and mitochondrial-derived reactive oxygen species. Functionally, (Microbial infection) Promotes Plasmodium berghei parasite transmission from the mammalian host to the mosquito probably by reducing the blood bolus viscosity. Facilitates sporozoite transmission from the mosquito to the mammalian host during blood feeding. In Anopheles gambiae (African malaria mosquito), this protein is Apyrase.